Here is a 354-residue protein sequence, read N- to C-terminus: Lysophosphatidic acid receptor 3 (354 aa).

At 1–31 (MNECHYDKRMDFFYNRSNTDTADEWTGTKLV) the chain is on the extracellular side. Asn-15 is a glycosylation site (N-linked (GlcNAc...) asparagine). Residues 32–52 (IVLCVGTFFCLFIFFSNSLVI) traverse the membrane as a helical segment. The Cytoplasmic segment spans residues 53-67 (AAVITNRKFHFPFYY). Residues 68-88 (LLANLAAADFFAGIAYVFLMF) form a helical membrane-spanning segment. Topologically, residues 89 to 101 (NTGPVSKTLTVNR) are extracellular. The helical transmembrane segment at 102 to 124 (WFLRQGLLDTSLTASLANLLVIA) threads the bilayer. At 125–146 (VERHMSIMRMRVHSNLTKKRVT) the chain is on the cytoplasmic side. A helical transmembrane segment spans residues 147-167 (LLILLVWAIAIFMGAVPTLGW). The Extracellular segment spans residues 168–186 (NCLCNISACSSLAPIYSRS). A glycan (N-linked (GlcNAc...) asparagine) is linked at Asn-172. The chain crosses the membrane as a helical span at residues 187–207 (YLIFWTVSNLLAFFIMVAVYV). At 208-240 (RIYMYVKRKTNVLSPHTSGSISRRRAPMKLMKT) the chain is on the cytoplasmic side. The chain crosses the membrane as a helical span at residues 241-261 (VMTVLGAFVVCWTPGLVVLLL). The Extracellular portion of the chain corresponds to 262–276 (DGLNCKQCNVQHVKR). The chain crosses the membrane as a helical span at residues 277–295 (WFLLLALLNSVMNPIIYSY). The Cytoplasmic segment spans residues 296–354 (KDEDMYNTMRKMICCALQDSNTERRPSRNPSTIHSRSETGSQYLEDSISQGPVCNKNGS). Cys-309 carries S-palmitoyl cysteine lipidation. Residues 315-354 (SNTERRPSRNPSTIHSRSETGSQYLEDSISQGPVCNKNGS) are disordered. Polar residues predominate over residues 323–354 (RNPSTIHSRSETGSQYLEDSISQGPVCNKNGS).

Belongs to the G-protein coupled receptor 1 family. Most abundantly expressed in testes, kidney, and lung, with moderate levels in small intestine, and low levels in heart, stomach, spleen, and adult and perinatal brain. Little or no expression in embryonic brain, liver, or thymus.

The protein localises to the cell membrane. Receptor for lysophosphatidic acid (LPA), a mediator of diverse cellular activities. Seems to be coupled to the G(i)/G(o) and G(q) families of heteromeric G proteins. The chain is Lysophosphatidic acid receptor 3 (Lpar3) from Mus musculus (Mouse).